Here is a 370-residue protein sequence, read N- to C-terminus: tRNA-specific 2-thiouridylase MnmA (370 aa).

Residues 11 to 18 (GMSGGVDS) and Met37 contribute to the ATP site. The segment at 97-99 (NPD) is interaction with target base in tRNA. Cys102 functions as the Nucleophile in the catalytic mechanism. A disulfide bridge links Cys102 with Cys199. Residue Gly126 coordinates ATP. The tract at residues 149-151 (KDQ) is interaction with tRNA. Residue Cys199 is the Cysteine persulfide intermediate of the active site. The interval 307-308 (RY) is interaction with tRNA.

The protein belongs to the MnmA/TRMU family.

The protein resides in the cytoplasm. It carries out the reaction S-sulfanyl-L-cysteinyl-[protein] + uridine(34) in tRNA + AH2 + ATP = 2-thiouridine(34) in tRNA + L-cysteinyl-[protein] + A + AMP + diphosphate + H(+). In terms of biological role, catalyzes the 2-thiolation of uridine at the wobble position (U34) of tRNA, leading to the formation of s(2)U34. The chain is tRNA-specific 2-thiouridylase MnmA from Staphylococcus carnosus (strain TM300).